We begin with the raw amino-acid sequence, 1026 residues long: Glutactin (1026 aa).

A signal peptide spans 1-17 (MKPLLLVLALCGAQVHA). Tyr26 and Tyr29 each carry sulfotyrosine. Asn115 is a glycosylation site (N-linked (GlcNAc...) asparagine). Cys123 and Cys145 are oxidised to a cystine. Tyr182 carries the post-translational modification Sulfotyrosine. An intrachain disulfide couples Cys298 to Cys316. N-linked (GlcNAc...) asparagine glycans are attached at residues Asn368 and Asn402. Residue Tyr559 is modified to Sulfotyrosine. A disordered region spans residues 601–641 (PITTTTTTTTTTTTTSRPYAYNPYANWQNRPSQQHPNWHPA). The span at 603–615 (TTTTTTTTTTTTT) shows a compositional bias: low complexity. Positions 625–636 (ANWQNRPSQQHP) are enriched in polar residues. The residue at position 645 (Tyr645) is a Sulfotyrosine. Disordered regions lie at residues 659–695 (EREQ…REQE) and 723–1026 (EREQ…NSRN). A compositionally biased stretch (basic and acidic residues) spans 723–752 (EREQYEREQQEREQREREELERQQREREQQ). Sulfotyrosine is present on Tyr727. Asn810 carries N-linked (GlcNAc...) asparagine glycosylation. Positions 811-854 (FSEEDREQQQQEQLRREQQEQQEREYQLQLEREQQEREQQERGQ) are enriched in basic and acidic residues. Residues Tyr836, Tyr862, Tyr865, Tyr868, Tyr922, and Tyr928 each carry the sulfotyrosine modification. Low complexity predominate over residues 855-866 (QEPGPEEYPSYE). A compositionally biased stretch (basic and acidic residues) spans 867 to 893 (EYSRALQEKNAERDRIYAEEQERERQQ). The span at 923–944 (DGDRSYAEEQEREQQRRDQVEQ) shows a compositional bias: basic and acidic residues. Positions 945–969 (EREEQPDEDQGEEYERSPDEEEAAE) are enriched in acidic residues. Sulfotyrosine occurs at positions 981, 984, and 1006. Residues 1002 to 1026 (EEERYRAQQEEEDRIQAERERNSRN) are compositionally biased toward basic and acidic residues.

It in the N-terminal section; belongs to the type-B carboxylesterase/lipase family. In terms of processing, extensively O-glycosylated and also N-glycosylated. About four tyrosines are sulfated.

It localises to the secreted. It is found in the extracellular space. Its subcellular location is the extracellular matrix. The protein resides in the basement membrane. Its function is as follows. Not known. Binds calcium ions. This chain is Glutactin (Glt), found in Drosophila melanogaster (Fruit fly).